A 542-amino-acid polypeptide reads, in one-letter code: MLQVASGNREEGQVVELKKTKYLPYLFNLVMPKSFYHSHNRIVVARLYSNVHKHDKQAAEFFEGFQTPCFEVPASMFPGEAPLNKIVFMPPVMLPMGFEAGGVFGPGVLPRRSYPIDLTASGHKGQSPPLFVGLRRLYVQLPSEIESFLDKMGEFPATQDTLVYGMRRSNQLLKEEQAQELMLRNDLSLSMAYNLPAPPTPPSPYPYRHVPVQYNIYTPDLSNVLMMMPHQRKLTVAILSTVNNPHVPSVALATMGDEECPKFELPSDVFPICEGVNRPIFLPRRFLPKGFESGCVFKPGSLSELWFMGYMGRFSPPQPQHNCAITPPLFVGKISRVVLAFDLMKNIQMEYGAAQSSAQSEGSLNAVEPKKPNVPITKGFLVMETEHPTPPSGGYSLQSYQEGSAKGCVVKVEKGETQEMDEAHPTKEESKSEEEGEVQSGSQEEKYLSWFKVDSDIDLIAETMVDMGTAQMSLIDEEALPGVDGACVLNQLREVFEDRNEIRQNIDQLIHDHIYRMNRDRMLALRLPIRSYFRMYDKVDNQ.

Residues 415 to 430 (GETQEMDEAHPTKEES) show a composition bias toward basic and acidic residues. The segment at 415–443 (GETQEMDEAHPTKEESKSEEEGEVQSGSQ) is disordered.

Belongs to the DM7 family.

The chain is DM7 family protein GG17591 from Drosophila erecta (Fruit fly).